The primary structure comprises 303 residues: MYSCTSPSGIKVSLSTPEIWEEFYPKTEMIVTRNRGRVIFPHLDYIIKGLDPGSLYSIYIHLERVDGIKYKFDAGEWKEFAKGDPILPIQYKEHPRGKRTGAEWMSEPVSFAHIKITNNPEIKDQKVILVQSMHKHIPVVTVKQVRHYKTGYQEDFSGEQFRLEATEFMVVTAYQNEILKNLKVHHNKFASGFRSNGKRRLSSDSENSENSPPKRSKLVTPPTISPQIDLPQQTPYYFNQNFVAPQNYQPQFASAQNYNFEVQNNAQLAWNMYYQKQYEFWWQQQQMMMPGQPQELKNEFQSL.

The segment at residues 14 to 195 is a DNA-binding region (T-box); sequence LSTPEIWEEF…HNKFASGFRS (182 aa). Residues 193-225 form a disordered region; it reads FRSNGKRRLSSDSENSENSPPKRSKLVTPPTIS. The segment covering 204–213 has biased composition (low complexity); it reads DSENSENSPP.

Its subcellular location is the nucleus. Transcription factor. Required for mesodermal induction, acting redundantly with transcription factor tbx-37. Together with tbx-37, acts by inducing cell fates in the AB lineage, thereby playing a role in development of the anterior pharynx. This Caenorhabditis elegans protein is T-box protein 38 (tbx-38).